Reading from the N-terminus, the 242-residue chain is MSEWLFDLGNSRFKYAPLDGTRAGDVQAWAHGAEAMDTAALSALPSGKVAHVASVAAAGLTERVLASLRTRFEQVRVVRTAAACAGVRIAYADPSRFGVDRFLALLGARGDAPVLVAGVGTALTIDVLGADGQHHGGRIAASPTTMREALHARAVQLPPTGGAYAELANDTDDALTSGCDGAAVALIERSLQHAARTLGMPVCLLVHGGGAPPLLPLLPTAEFRAALVLDGLATWATHSAAP.

ATP is bound at residue 7–14; sequence DLGNSRFK. Residues Tyr-91 and 98 to 101 contribute to the substrate site; that span reads GVDR. Asp-100 acts as the Proton acceptor in catalysis. Thr-121 is an ATP binding site. Residue Thr-171 coordinates substrate.

It belongs to the type III pantothenate kinase family. As to quaternary structure, homodimer. Requires NH4(+) as cofactor. It depends on K(+) as a cofactor.

Its subcellular location is the cytoplasm. It carries out the reaction (R)-pantothenate + ATP = (R)-4'-phosphopantothenate + ADP + H(+). Its pathway is cofactor biosynthesis; coenzyme A biosynthesis; CoA from (R)-pantothenate: step 1/5. Catalyzes the phosphorylation of pantothenate (Pan), the first step in CoA biosynthesis. This Xanthomonas campestris pv. campestris (strain 8004) protein is Type III pantothenate kinase.